Consider the following 168-residue polypeptide: Quinol oxidase subunit 2 (168 aa).

A helical membrane pass occupies residues 9-31 (EVWFIVMLVLVLIFFSWNVYYLS).

It belongs to the cytochrome c oxidase subunit 2 family.

The protein resides in the cell membrane. It catalyses the reaction 2 a quinol + O2 = 2 a quinone + 2 H2O. Its function is as follows. The terminal oxidase is the component of the respiratory chain that catalyzes the reduction of oxygen to water. Subunits 1-3 form the functional core of the enzyme complex. Functionally, subunit 2 transfers the electrons from caldariella quinol to the bimetallic center of the catalytic subunit 1 that is formed by heme A3 and Cu(B). The chain is Quinol oxidase subunit 2 (soxA) from Sulfolobus acidocaldarius (strain ATCC 33909 / DSM 639 / JCM 8929 / NBRC 15157 / NCIMB 11770).